The primary structure comprises 185 residues: Elongation factor P (185 aa).

The protein belongs to the elongation factor P family.

The protein resides in the cytoplasm. It functions in the pathway protein biosynthesis; polypeptide chain elongation. In terms of biological role, involved in peptide bond synthesis. Stimulates efficient translation and peptide-bond synthesis on native or reconstituted 70S ribosomes in vitro. Probably functions indirectly by altering the affinity of the ribosome for aminoacyl-tRNA, thus increasing their reactivity as acceptors for peptidyl transferase. The sequence is that of Elongation factor P (efp) from Lactococcus lactis subsp. lactis (strain IL1403) (Streptococcus lactis).